A 199-amino-acid chain; its full sequence is Ribonuclease HII (199 aa).

The RNase H type-2 domain occupies 1-199 (MCVCGIDEAG…TYKNLVQGHI (199 aa)). The a divalent metal cation site is built by aspartate 7, glutamate 8, and aspartate 97.

It belongs to the RNase HII family. Requires Mn(2+) as cofactor. Mg(2+) is required as a cofactor.

Its subcellular location is the cytoplasm. The enzyme catalyses Endonucleolytic cleavage to 5'-phosphomonoester.. Endonuclease that specifically degrades the RNA of RNA-DNA hybrids. The polypeptide is Ribonuclease HII (Picrophilus torridus (strain ATCC 700027 / DSM 9790 / JCM 10055 / NBRC 100828 / KAW 2/3)).